Here is a 73-residue protein sequence, read N- to C-terminus: uncharacterized protein (73 aa).

This is an uncharacterized protein from Caprine arthritis encephalitis virus (CAEV).